Consider the following 118-residue polypeptide: Small ribosomal subunit protein uS13 (118 aa).

A disordered region spans residues 92-118 (RRGLPVRGQRTKTNARTRKGPRKPIKK).

This sequence belongs to the universal ribosomal protein uS13 family. As to quaternary structure, part of the 30S ribosomal subunit. Forms a loose heterodimer with protein S19. Forms two bridges to the 50S subunit in the 70S ribosome.

Functionally, located at the top of the head of the 30S subunit, it contacts several helices of the 16S rRNA. In the 70S ribosome it contacts the 23S rRNA (bridge B1a) and protein L5 of the 50S subunit (bridge B1b), connecting the 2 subunits; these bridges are implicated in subunit movement. Contacts the tRNAs in the A and P-sites. This Pectobacterium carotovorum subsp. carotovorum (strain PC1) protein is Small ribosomal subunit protein uS13.